Reading from the N-terminus, the 420-residue chain is WD repeat-containing protein 21 (420 aa).

The short motif at 73-75 (RQF) is the DDB-boX element. 3 WD repeats span residues 251 to 289 (QSKGDVFSLKYLGDNLVIAGCRNKSVLVYDLRTKKECVQ), 293 to 332 (HGSSICSMQNLDFSQPKLLVSGLESKISLYDCRFLQSKKR), and 341 to 383 (GHSN…PFKE).

The protein resides in the cytoplasm. Its subcellular location is the nucleus. In Schizosaccharomyces pombe (strain 972 / ATCC 24843) (Fission yeast), this protein is WD repeat-containing protein 21 (wdr21).